A 68-amino-acid chain; its full sequence is MKDFIMPRTFPCPRCGQPSVWEGNESRPFCSERCKLIDLGAWASEEYKLKTQDAPTSGKGQHSDDYED.

Zn(2+)-binding residues include cysteine 12, cysteine 15, cysteine 30, and cysteine 34. The segment at 48–68 (KLKTQDAPTSGKGQHSDDYED) is disordered.

The protein belongs to the DNA gyrase inhibitor YacG family. As to quaternary structure, interacts with GyrB. Requires Zn(2+) as cofactor.

Inhibits all the catalytic activities of DNA gyrase by preventing its interaction with DNA. Acts by binding directly to the C-terminal domain of GyrB, which probably disrupts DNA binding by the gyrase. This is DNA gyrase inhibitor YacG from Acinetobacter baylyi (strain ATCC 33305 / BD413 / ADP1).